Here is a 455-residue protein sequence, read N- to C-terminus: tRNA modification GTPase MnmE (455 aa).

3 residues coordinate (6S)-5-formyl-5,6,7,8-tetrahydrofolate: arginine 26, glutamate 86, and arginine 125. Positions 222-376 (GLKTAIIGRP…VEEKINQIFF (155 aa)) constitute a TrmE-type G domain. Asparagine 232 contributes to the K(+) binding site. Residues 232-237 (NVGKSS), 251-257 (TDIAGTT), and 276-279 (DTAG) contribute to the GTP site. Serine 236 lines the Mg(2+) pocket. Residues threonine 251, isoleucine 253, and threonine 256 each contribute to the K(+) site. Threonine 257 lines the Mg(2+) pocket. Lysine 455 is a (6S)-5-formyl-5,6,7,8-tetrahydrofolate binding site.

The protein belongs to the TRAFAC class TrmE-Era-EngA-EngB-Septin-like GTPase superfamily. TrmE GTPase family. In terms of assembly, homodimer. Heterotetramer of two MnmE and two MnmG subunits. It depends on K(+) as a cofactor.

Its subcellular location is the cytoplasm. Functionally, exhibits a very high intrinsic GTPase hydrolysis rate. Involved in the addition of a carboxymethylaminomethyl (cmnm) group at the wobble position (U34) of certain tRNAs, forming tRNA-cmnm(5)s(2)U34. The sequence is that of tRNA modification GTPase MnmE from Lactococcus lactis subsp. lactis (strain IL1403) (Streptococcus lactis).